A 242-amino-acid chain; its full sequence is MAILRSLLLPLGLLLCLWLLCSPASCTNSTTNCKPFLSVTTKKSSLIHISPDIYKSNTLYTVSTQVSHGIISVVLEARDQNKSVIGSWENPSDHCEGRAEYYLKGNFSTLFKAKWMSPNSTDITTVKINIYTVNSLRNAELDSITLPEVGTVTVKHVSTKQVITTPTHKPTPAPPKPTTNPQKTTTNHSIPTTSLPKPTTSLYTSHPKLTTTHKSSANRAFLCPVREAIQILFIFLIGTLLF.

The signal sequence occupies residues 1–26; the sequence is MAILRSLLLPLGLLLCLWLLCSPASC. At 27-220 the chain is on the extracellular side; the sequence is TNSTTNCKPF…TTHKSSANRA (194 aa). N-linked (GlcNAc...) asparagine glycosylation is found at N28, N81, and N106. Residues 162 to 209 form a disordered region; that stretch reads VITTPTHKPTPAPPKPTTNPQKTTTNHSIPTTSLPKPTTSLYTSHPKL. The span at 169–178 shows a compositional bias: pro residues; sequence KPTPAPPKPT. Over residues 179-205 the composition is skewed to low complexity; the sequence is TNPQKTTTNHSIPTTSLPKPTTSLYTS. The helical transmembrane segment at 221–241 threads the bilayer; sequence FLCPVREAIQILFIFLIGTLL. Position 242 (F242) is a topological domain, cytoplasmic.

In terms of processing, N-glycosylated.

It is found in the membrane. The protein resides in the apical cell membrane. Modulates leading keratinocyte migration and cellular adhesion to matrix proteins during a wound-healing response and promotes wound repair. May play a role during trichilemmal differentiation of the hair follicle. The polypeptide is Placenta-expressed transcript 1 protein (PLET1) (Bos taurus (Bovine)).